A 202-amino-acid polypeptide reads, in one-letter code: Small ribosomal subunit protein uS4c (202 aa).

One can recognise an S4 RNA-binding domain in the interval 90–148 (MRLDNVIFRLGMSSTIPGARQLVNHRHIMINDEMVDTPGYNCKPRDIITLKNISESRSG).

Belongs to the universal ribosomal protein uS4 family. Part of the 30S ribosomal subunit. Contacts protein S5. The interaction surface between S4 and S5 is involved in control of translational fidelity.

The protein resides in the plastid. It localises to the chloroplast. Its function is as follows. One of the primary rRNA binding proteins, it binds directly to 16S rRNA where it nucleates assembly of the body of the 30S subunit. With S5 and S12 plays an important role in translational accuracy. This is Small ribosomal subunit protein uS4c (rps4) from Haplomitrium hookeri (Hooker's flapwort).